A 443-amino-acid chain; its full sequence is uncharacterized protein (443 aa).

10 consecutive transmembrane segments (helical) span residues 7–29 (VSLY…MLNT), 68–87 (YISS…SIFT), 94–111 (VLSL…YAIF), 121–143 (VTLF…SMFA), 150–164 (IVII…SLTC), 179–201 (IIST…YIFF), 206–225 (LIIK…FAIS), 358–375 (IRFI…FIRN), 382–399 (LFVV…SFFG), and 409–431 (LFGM…IYKI).

Its subcellular location is the cell membrane. This is an uncharacterized protein from Escherichia coli (strain K12).